Reading from the N-terminus, the 351-residue chain is Methylthioribose-1-phosphate isomerase (351 aa).

Residues 51-53, Arg-94, and Gln-199 each bind substrate; that span reads RGA. The Proton donor role is filled by Asp-240. Residue 250–251 participates in substrate binding; the sequence is NK.

Belongs to the EIF-2B alpha/beta/delta subunits family. MtnA subfamily. As to quaternary structure, homodimer.

The enzyme catalyses 5-(methylsulfanyl)-alpha-D-ribose 1-phosphate = 5-(methylsulfanyl)-D-ribulose 1-phosphate. Its pathway is amino-acid biosynthesis; L-methionine biosynthesis via salvage pathway; L-methionine from S-methyl-5-thio-alpha-D-ribose 1-phosphate: step 1/6. In terms of biological role, catalyzes the interconversion of methylthioribose-1-phosphate (MTR-1-P) into methylthioribulose-1-phosphate (MTRu-1-P). This is Methylthioribose-1-phosphate isomerase from Bacillus thuringiensis (strain Al Hakam).